Consider the following 400-residue polypeptide: 1-deoxy-D-xylulose 5-phosphate reductoisomerase (400 aa).

NADPH is bound by residues Thr-10, Gly-11, Ser-12, Ile-13, Gly-36, Asn-38, and Asn-124. Lys-125 provides a ligand contact to 1-deoxy-D-xylulose 5-phosphate. Residue Glu-126 participates in NADPH binding. Residue Asp-150 coordinates Mn(2+). Residues Ser-151, Glu-152, Ser-186, and His-209 each coordinate 1-deoxy-D-xylulose 5-phosphate. Residue Glu-152 coordinates Mn(2+). Gly-215 provides a ligand contact to NADPH. The 1-deoxy-D-xylulose 5-phosphate site is built by Ser-222, Asn-227, Lys-228, and Glu-231. Residue Glu-231 coordinates Mn(2+).

This sequence belongs to the DXR family. Requires Mg(2+) as cofactor. Mn(2+) serves as cofactor.

The enzyme catalyses 2-C-methyl-D-erythritol 4-phosphate + NADP(+) = 1-deoxy-D-xylulose 5-phosphate + NADPH + H(+). It functions in the pathway isoprenoid biosynthesis; isopentenyl diphosphate biosynthesis via DXP pathway; isopentenyl diphosphate from 1-deoxy-D-xylulose 5-phosphate: step 1/6. Catalyzes the NADPH-dependent rearrangement and reduction of 1-deoxy-D-xylulose-5-phosphate (DXP) to 2-C-methyl-D-erythritol 4-phosphate (MEP). This chain is 1-deoxy-D-xylulose 5-phosphate reductoisomerase, found in Aliivibrio salmonicida (strain LFI1238) (Vibrio salmonicida (strain LFI1238)).